Here is a 194-residue protein sequence, read N- to C-terminus: MLQKVKDIYSESIQIQIAASSMLSENITNATQMVMQCLLGGNKVIACGVSRSYANAQFLVSNLLNRYDLVRPSFPSVLLSLESAVGSSLVFEQPPEELYCHQFNASAKSGDLLIAFAPLGTEKIVLNIISHAVSKEVNVIVLTGSNNDAIQGILADKDLEISIPATKESRILENHLFVINALCELVDQTLFPSA.

The region spanning 34–192 is the SIS domain; sequence VMQCLLGGNK…CELVDQTLFP (159 aa).

It belongs to the SIS family. DiaA subfamily.

This is an uncharacterized protein from Haemophilus influenzae (strain ATCC 51907 / DSM 11121 / KW20 / Rd).